Reading from the N-terminus, the 546-residue chain is Chaperonin GroEL (546 aa).

ATP contacts are provided by residues 29 to 32 (TLGP), lysine 50, 86 to 90 (DGTTT), glycine 414, 477 to 479 (NAA), and aspartate 493.

Belongs to the chaperonin (HSP60) family. As to quaternary structure, forms a cylinder of 14 subunits composed of two heptameric rings stacked back-to-back. Interacts with the co-chaperonin GroES.

The protein resides in the cytoplasm. It catalyses the reaction ATP + H2O + a folded polypeptide = ADP + phosphate + an unfolded polypeptide.. Together with its co-chaperonin GroES, plays an essential role in assisting protein folding. The GroEL-GroES system forms a nano-cage that allows encapsulation of the non-native substrate proteins and provides a physical environment optimized to promote and accelerate protein folding. This chain is Chaperonin GroEL, found in Geobacter metallireducens (strain ATCC 53774 / DSM 7210 / GS-15).